The following is a 173-amino-acid chain: Photosystem I assembly protein Ycf3 (173 aa).

TPR repeat units lie at residues 35–68 (AFYY…EKDP), 72–105 (SFIL…NPNL), and 120–153 (GNKL…APYN).

This sequence belongs to the Ycf3 family.

It localises to the plastid. The protein resides in the chloroplast thylakoid membrane. Functionally, essential for the assembly of the photosystem I (PSI) complex. May act as a chaperone-like factor to guide the assembly of the PSI subunits. This Cyanidium caldarium (Red alga) protein is Photosystem I assembly protein Ycf3.